The primary structure comprises 417 residues: Gamma-glutamyl phosphate reductase (417 aa).

Belongs to the gamma-glutamyl phosphate reductase family.

It is found in the cytoplasm. It carries out the reaction L-glutamate 5-semialdehyde + phosphate + NADP(+) = L-glutamyl 5-phosphate + NADPH + H(+). It participates in amino-acid biosynthesis; L-proline biosynthesis; L-glutamate 5-semialdehyde from L-glutamate: step 2/2. Catalyzes the NADPH-dependent reduction of L-glutamate 5-phosphate into L-glutamate 5-semialdehyde and phosphate. The product spontaneously undergoes cyclization to form 1-pyrroline-5-carboxylate. The protein is Gamma-glutamyl phosphate reductase of Escherichia coli O6:K15:H31 (strain 536 / UPEC).